The sequence spans 648 residues: MHSILRSSLSSREALRMRQLKGLRKERPGRHPLGVRLRAIWTSFLFPNPPHSGGKLRASTAAVEEHQEWSMDLPEGQAGGPTAQMYLWEQPEEASSRPLLSLEEQILNSTFEACDPHKTGTVTVAHLLAYLEAVTGQGPQDVRLQTLARSLDPYGEGAGATVELDTFLVVMRDWIAACQLQGGLERAEETAYEGALASPHLPSVCPEAEESANLESFGGEDPRPEGPATAELLSNLEDLELSNRRLAGENAKLQRSVETAEEGSARLGEEITALRKQLRSTQQALQVAKALDEELEDLKTLAKSLEEQNRSLMAQARHTEKEQQHLAAEVETLQEENEKLLAERDGVKRRSEELATEKDALKRQLCECERLICQREAVLSERTRHAESLARTLEEYRTTTQELRQEISNLEEQLSQSQEGPEELLEGAEAGRVGWIMALPPSLDLEIQAIRQEQDVASAGLSSPLYGVWQWEEVEPEPEPEPEPEPEPEPQEVEFPSEDPARQQTDLQREPVRALEGSRAPCLRLSRSQEEEEEEEESWVLADPSSPLGTYHHKLAPGSSRESCHIVPEMHQALMPVVRDLVPVERSRTQHCLHPQHSPGIRISQHPLVPTPVLGLLLLLLLSILLFSQSPPPTWPHLQLYYLQPPPV.

At 1–606 (MHSILRSSLS…HSPGIRISQH (606 aa)) the chain is on the cytoplasmic side. A disordered region spans residues 206–228 (PEAEESANLESFGGEDPRPEGPA). A coiled-coil region spans residues 230 to 420 (AELLSNLEDL…EEQLSQSQEG (191 aa)). Residues 473 to 497 (EVEPEPEPEPEPEPEPEPQEVEFPS) are compositionally biased toward acidic residues. Positions 473–545 (EVEPEPEPEP…EESWVLADPS (73 aa)) are disordered. A helical; Anchor for type IV membrane protein membrane pass occupies residues 607-627 (PLVPTPVLGLLLLLLLSILLF). Residues 628 to 648 (SQSPPPTWPHLQLYYLQPPPV) lie on the Perinuclear space side of the membrane.

Core component the LINC complex which is composed of inner nuclear membrane SUN domain-containing proteins coupled to outer nuclear membrane KASH domain-containing nesprins. SUN and KASH domain-containing proteins seem to bind each other promiscuously; however, differentially expression of LINC complex constituents is giving rise to specific assemblies. At least SUN1/2-containing core LINC complexes are proposed to be hexameric composed of three protomers of each KASH and SUN domain-containing protein. Interacts with SUN1; this interaction mediates its telomere localization by forming a SUN1:KASH5 LINC complex. Component of a probable SUN2:KASH5 LINC complex. Self-associates. Interacts with DYNC1H1, DCTN1, DYNC1I1/2 and PAFAH1B1; suggesting the association with the dynein-dynactin motor complex. As to expression, restricted to the testis and the early ootidogenesis ovary. Expressed in spermatocytes and oocytes (at protein level).

It localises to the nucleus outer membrane. The protein resides in the nucleus. It is found in the chromosome. The protein localises to the telomere. Its subcellular location is the nucleus envelope. As a component of the LINC (LInker of Nucleoskeleton and Cytoskeleton) complex, involved in the connection between the nuclear lamina and the cytoskeleton. The nucleocytoplasmic interactions established by the LINC complex play an important role in the transmission of mechanical forces across the nuclear envelope and in nuclear movement and positioning. Required for telomere attachment to nuclear envelope in the prophase of meiosis and for rapid telomere prophase movements implicating a SUN1/2:KASH5 LINC complex in which SUN1 and SUN2 seem to act at least partial redundantly. Required for homolog pairing during meiotic prophase in spermatocytes and probably oocytes. Essential for male and female gametogenesis. Recruits cytoplasmic dynein to telomere attachment sites at the nuclear envelope in spermatocytes. In oocytes is involved in meiotic resumption and spindle formation. The polypeptide is Protein KASH5 (Mus musculus (Mouse)).